A 211-amino-acid chain; its full sequence is tRNA (guanine-N(7)-)-methyltransferase (211 aa).

The S-adenosyl-L-methionine site is built by glutamate 43, aspartate 68, and asparagine 117. Substrate is bound by residues lysine 121, aspartate 153, and 190–193 (TEYE).

Belongs to the class I-like SAM-binding methyltransferase superfamily. TrmB family.

It catalyses the reaction guanosine(46) in tRNA + S-adenosyl-L-methionine = N(7)-methylguanosine(46) in tRNA + S-adenosyl-L-homocysteine. The protein operates within tRNA modification; N(7)-methylguanine-tRNA biosynthesis. Functionally, catalyzes the formation of N(7)-methylguanine at position 46 (m7G46) in tRNA. The chain is tRNA (guanine-N(7)-)-methyltransferase from Clostridium acetobutylicum (strain ATCC 824 / DSM 792 / JCM 1419 / IAM 19013 / LMG 5710 / NBRC 13948 / NRRL B-527 / VKM B-1787 / 2291 / W).